The following is a 188-amino-acid chain: Glandular kallikrein-3, submandibular (188 aa).

One can recognise a Peptidase S1 domain in the interval Asn-1–Lys-185. Asn-10 and Asn-36 each carry an N-linked (GlcNAc...) asparagine glycan. The active-site Charge relay system is Asp-47. 3 cysteine pairs are disulfide-bonded: Cys-79/Cys-146, Cys-111/Cys-125, and Cys-136/Cys-161. Ser-140 functions as the Charge relay system in the catalytic mechanism.

It belongs to the peptidase S1 family. Kallikrein subfamily.

The catalysed reaction is Preferential cleavage of Arg-|-Xaa bonds in small molecule substrates. Highly selective action to release kallidin (lysyl-bradykinin) from kininogen involves hydrolysis of Met-|-Xaa or Leu-|-Xaa.. Functionally, glandular kallikreins cleave Met-Lys and Arg-Ser bonds in kininogen to release Lys-bradykinin. The sequence is that of Glandular kallikrein-3, submandibular (Klk3) from Rattus norvegicus (Rat).